The chain runs to 216 residues: UPF0502 protein VCM66_A0698 (216 aa).

Belongs to the UPF0502 family.

This chain is UPF0502 protein VCM66_A0698, found in Vibrio cholerae serotype O1 (strain M66-2).